Here is a 114-residue protein sequence, read N- to C-terminus: Large ribosomal subunit protein bL19 (114 aa).

The protein belongs to the bacterial ribosomal protein bL19 family.

Functionally, this protein is located at the 30S-50S ribosomal subunit interface and may play a role in the structure and function of the aminoacyl-tRNA binding site. The sequence is that of Large ribosomal subunit protein bL19 from Listeria welshimeri serovar 6b (strain ATCC 35897 / DSM 20650 / CCUG 15529 / CIP 8149 / NCTC 11857 / SLCC 5334 / V8).